Here is a 295-residue protein sequence, read N- to C-terminus: UDP-N-acetylenolpyruvoylglucosamine reductase (295 aa).

The 165-residue stretch at 24–188 folds into the FAD-binding PCMH-type domain; sequence KVGGNAEIFF…LKAIFKANKG (165 aa). R168 is an active-site residue. S217 serves as the catalytic Proton donor. Residue E287 is part of the active site.

The protein belongs to the MurB family. The cofactor is FAD.

It localises to the cytoplasm. The enzyme catalyses UDP-N-acetyl-alpha-D-muramate + NADP(+) = UDP-N-acetyl-3-O-(1-carboxyvinyl)-alpha-D-glucosamine + NADPH + H(+). It participates in cell wall biogenesis; peptidoglycan biosynthesis. In terms of biological role, cell wall formation. The protein is UDP-N-acetylenolpyruvoylglucosamine reductase of Rickettsia typhi (strain ATCC VR-144 / Wilmington).